The chain runs to 607 residues: MFGYWGKILRVNLSDGTIKEETFNEEFAKKWLGTRGFGIYFLLKEMDPKIDPFSPENKLIFATGPLTGTSAPTGGRYMVITKSPLTGYIAMANSGGYFGAELKFAGWDAIIVEGKADHPVYIYINDENVEIRDASKVWGKLVSETERMLKEEVGDKHVQIASIGPAGENKVRFAAVMNNGHRAAGRGGVGAVMGSKNLKAIVVRGHKRVEVADKGKFMEVIREKIEKLRKDPVAGGGLPKYGTAVLVNIINEHGLYPTRNFQTGVFKYAYEQSGEAMAAKYLVRNKPCFACPIGCGRVNYLPSIGETEGPEYESTWALGANLGINDLASIIEANHFADEYGMDTISLGGTLATAMELYERGLIKQEDIGGENEPPFRFGNTEVLHYWIHKIAKREGFGDILAEGGYRLAEKFNGLEYFMGVKKQELPAYDPRGAEGHGLGYATNNRGGCHIKQYMISPEILGYPYKMDPHDISDEKVKMVILFQDLTAVIDAAGLCIFTTFGLGADDYTDMLNAALGWDFSTDDYLKIGERIWNAERLFNLKAGLDPLKEDTLPKRFLEEPMPEGPNKGHVVRLKEMLPRYYKLRGWTEDGRIPEEKLKELGLEEFM.

Tungstopterin contacts are provided by Arg76, Asn93, Gly95, Arg182, Ala183, Gly185, and Arg186. Residues Cys288, Cys291, and Cys295 each contribute to the [4Fe-4S] cluster site. 6 residues coordinate tungstopterin: Asp338, Asp343, Arg446, Lys452, Asp491, and Leu495. Cys496 is a [4Fe-4S] cluster binding site. Ile497 is a tungstopterin binding site.

This sequence belongs to the AOR/FOR family. As to quaternary structure, homodimer. Requires [4Fe-4S] cluster as cofactor. Tungstopterin is required as a cofactor.

It carries out the reaction an aldehyde + 2 oxidized [2Fe-2S]-[ferredoxin] + H2O = a carboxylate + 2 reduced [2Fe-2S]-[ferredoxin] + 3 H(+). The protein is Tungsten-containing aldehyde ferredoxin oxidoreductase (aor) of Pyrococcus horikoshii (strain ATCC 700860 / DSM 12428 / JCM 9974 / NBRC 100139 / OT-3).